Here is a 692-residue protein sequence, read N- to C-terminus: NADH-ubiquinone oxidoreductase chain 5 (692 aa).

Helical transmembrane passes span 5 to 23 (IIIL…GRKV), 30 to 52 (ILGC…EVGF), 81 to 103 (LTVS…SIGY), 112 to 129 (RFFS…ILVT), 133 to 155 (YLLM…SFWF), 168 to 190 (FLTN…WSLG), 200 to 222 (LAPY…GAMA), 243 to 262 (VSAL…LLIR), 272 to 294 (TVLL…IGLF), 301 to 319 (IIAY…AIGL), 329 to 351 (LINH…HAVV), 364 to 386 (SFLP…FPFM), 409 to 431 (NVYF…VIYL), 452 to 471 (IFLS…FGYL), 511 to 528 (LLPF…IVYY), 535 to 557 (VVDF…RFLV), and 615 to 637 (YALY…SIFF).

This sequence belongs to the complex I subunit 5 family.

The protein resides in the mitochondrion inner membrane. The enzyme catalyses a ubiquinone + NADH + 5 H(+)(in) = a ubiquinol + NAD(+) + 4 H(+)(out). In terms of biological role, core subunit of the mitochondrial membrane respiratory chain NADH dehydrogenase (Complex I) that is believed to belong to the minimal assembly required for catalysis. Complex I functions in the transfer of electrons from NADH to the respiratory chain. The immediate electron acceptor for the enzyme is believed to be ubiquinone. This is NADH-ubiquinone oxidoreductase chain 5 (nd5) from Hypocrea jecorina (Trichoderma reesei).